A 103-amino-acid polypeptide reads, in one-letter code: Large ribosomal subunit protein bL21 (103 aa).

This sequence belongs to the bacterial ribosomal protein bL21 family. Part of the 50S ribosomal subunit. Contacts protein L20.

In terms of biological role, this protein binds to 23S rRNA in the presence of protein L20. This is Large ribosomal subunit protein bL21 from Sodalis glossinidius (strain morsitans).